The chain runs to 343 residues: Peptide methionine sulfoxide reductase msrA/msrB (343 aa).

The tract at residues Lys21–Lys174 is peptide methionine sulfoxide reductase A. Cys29 acts as the Cysteine sulfenic acid (-SOH) intermediate in catalysis. Residues Asp191 to Leu314 enclose the MsrB domain. Cys303 (nucleophile) is an active-site residue.

The protein in the N-terminal section; belongs to the MsrA Met sulfoxide reductase family. This sequence in the C-terminal section; belongs to the MsrB Met sulfoxide reductase family.

It catalyses the reaction L-methionyl-[protein] + [thioredoxin]-disulfide + H2O = L-methionyl-(S)-S-oxide-[protein] + [thioredoxin]-dithiol. The enzyme catalyses [thioredoxin]-disulfide + L-methionine + H2O = L-methionine (S)-S-oxide + [thioredoxin]-dithiol. It carries out the reaction L-methionyl-[protein] + [thioredoxin]-disulfide + H2O = L-methionyl-(R)-S-oxide-[protein] + [thioredoxin]-dithiol. Its function is as follows. Has an important function as a repair enzyme for proteins that have been inactivated by oxidation. Catalyzes the reversible oxidation-reduction of methionine sulfoxide in proteins to methionine. The polypeptide is Peptide methionine sulfoxide reductase msrA/msrB (Enterococcus faecalis (Streptococcus faecalis)).